Here is a 477-residue protein sequence, read N- to C-terminus: 3-isopropylmalate dehydratase large subunit (477 aa).

3 residues coordinate [4Fe-4S] cluster: Cys352, Cys413, and Cys416.

The protein belongs to the aconitase/IPM isomerase family. LeuC type 1 subfamily. As to quaternary structure, heterodimer of LeuC and LeuD. [4Fe-4S] cluster serves as cofactor.

The enzyme catalyses (2R,3S)-3-isopropylmalate = (2S)-2-isopropylmalate. The protein operates within amino-acid biosynthesis; L-leucine biosynthesis; L-leucine from 3-methyl-2-oxobutanoate: step 2/4. Functionally, catalyzes the isomerization between 2-isopropylmalate and 3-isopropylmalate, via the formation of 2-isopropylmaleate. This Pseudomonas putida (strain ATCC 47054 / DSM 6125 / CFBP 8728 / NCIMB 11950 / KT2440) protein is 3-isopropylmalate dehydratase large subunit.